The chain runs to 195 residues: Peptidyl-tRNA hydrolase (195 aa).

Tyr17 contacts tRNA. Residue His22 is the Proton acceptor of the active site. The tRNA site is built by Tyr68, Asn70, and Asn116.

This sequence belongs to the PTH family. As to quaternary structure, monomer.

It localises to the cytoplasm. The enzyme catalyses an N-acyl-L-alpha-aminoacyl-tRNA + H2O = an N-acyl-L-amino acid + a tRNA + H(+). Its function is as follows. Hydrolyzes ribosome-free peptidyl-tRNAs (with 1 or more amino acids incorporated), which drop off the ribosome during protein synthesis, or as a result of ribosome stalling. Functionally, catalyzes the release of premature peptidyl moieties from peptidyl-tRNA molecules trapped in stalled 50S ribosomal subunits, and thus maintains levels of free tRNAs and 50S ribosomes. The chain is Peptidyl-tRNA hydrolase from Shewanella oneidensis (strain ATCC 700550 / JCM 31522 / CIP 106686 / LMG 19005 / NCIMB 14063 / MR-1).